The sequence spans 530 residues: MARLCTHTESGHYLMALDAGTGSVRAVIFDLQGKQIAVDQAEWQHLAVPDVPGSMEFDLAKNWQLACQCIRQALQKAAIPATAIAAVSACSMREGIVIYDSNGEPIWACANVDARAAHEVSELKELHDNTFEEEVYRCSGQTLALSAIPRLLWLAHHRPDIYHRASTVTMISDWMAFMLSGELAVDPSNAGTTGLLDLVTRNWKRSLLQMAGLRSDILSPVKETGTLLGHISQKAAEQCDLQAGTPVIVGGGDVQLGCLGLGVVRPAQTAVLGGTFWQQVVNLPAPVTDPNMNVRINPHVIPGMVQTESISFFTGLTMRWFRDAFCAEEKLIAERLGIDAYSLLEDMASRVPPGAHGVMPIFSDVMRFKRWYHAAPSFINLSIDPEKCNKATLFRALEENAAIVSACNLQQIAAFSGVQADSLVFAGGGSKGKLWSQILADVTGLTVHVPVVKEATALGCAIAAGVGVGVWPSLAETGEKLVRWDREHKPNPENFAVYQQAREKWQAVYQDQRALVDGGLTTSLWKAPGL.

Belongs to the FGGY kinase family.

It is found in the cytoplasm. The enzyme catalyses (S)-4,5-dihydroxypentane-2,3-dione + ATP = (2S)-2-hydroxy-3,4-dioxopentyl phosphate + ADP + H(+). Catalyzes the phosphorylation of autoinducer-2 (AI-2) to phospho-AI-2, which subsequently inactivates the transcriptional regulator LsrR and leads to the transcription of the lsr operon. Phosphorylates the ring-open form of (S)-4,5-dihydroxypentane-2,3-dione (DPD), which is the precursor to all AI-2 signaling molecules, at the C5 position. This chain is Autoinducer-2 kinase, found in Salmonella paratyphi A (strain ATCC 9150 / SARB42).